A 237-amino-acid polypeptide reads, in one-letter code: Oligoribonuclease, mitochondrial (237 aa).

Residues 1 to 25 (MLGVSLGARLLRGVGGRRGQFGARG) constitute a mitochondrion transit peptide. The region spanning 43-207 (MVWVDLEMTG…DDISESIKEL (165 aa)) is the Exonuclease domain. Residues D47 and E49 each coordinate Mg(2+). Position 92 is a phosphoserine (S92). The residue at position 122 (Y122) is a Phosphotyrosine. D147 contributes to the Mg(2+) binding site. Position 173 is an N6-acetyllysine (K173). H194 is an active-site residue. D199 serves as a coordination point for Mg(2+).

Belongs to the oligoribonuclease family. In terms of assembly, homodimer. Homotetramer. It depends on Mn(2+) as a cofactor. The cofactor is Mg(2+).

The protein localises to the mitochondrion intermembrane space. It localises to the mitochondrion matrix. It is found in the mitochondrion. Its subcellular location is the cytoplasm. The protein resides in the nucleus. 3'-to-5'exoribonuclease that preferentially degrades DNA and RNA oligonucleotides composed of only two nucleotides. Binds and degrades longer oligonucleotides with a lower affinity. Plays dual roles in mitochondria, scavenging nanoRNAs (small RNA oligonucleotides of &lt;5 nucleotides) that are produced by the degradosome and clearing short RNAs that are generated by RNA processing. Essential for correct initiation of mitochondrial transcription, degrading mitochondrial RNA dinucleotides to prevent RNA-primed transcription at non-canonical sites in the mitochondrial genome. Essential for embryonic development. The chain is Oligoribonuclease, mitochondrial (Rexo2) from Mus musculus (Mouse).